Reading from the N-terminus, the 478-residue chain is Violaxanthin de-epoxidase, chloroplastic (478 aa).

Residues 388–453 are a coiled coil; it reads LVERLEKKVE…RELSKEEMDV (66 aa).

It belongs to the calycin superfamily. Lipocalin family.

The protein resides in the plastid. It is found in the chloroplast thylakoid membrane. The enzyme catalyses all-trans-violaxanthin + 2 L-ascorbate = all-trans-zeaxanthin + 2 L-dehydroascorbate + 2 H2O. In terms of biological role, part of the xanthophyll (or violaxanthin) cycle for controlling the concentration of zeaxanthin in chloroplasts. Catalyzes the two-step mono de-epoxidation reaction. Stereospecific for all-trans xanthophylls. Zeaxanthin induces the dissipation of excitation energy in the chlorophyll of the light-harvesting protein complex of photosystem II. The protein is Violaxanthin de-epoxidase, chloroplastic (VDE1) of Nicotiana tabacum (Common tobacco).